A 269-amino-acid chain; its full sequence is Myelin protein zero-like protein 1 (269 aa).

The first 35 residues, 1-35, serve as a signal peptide directing secretion; it reads MAASAGAGAVIAAPDSRRWLWSVLAAALGLLTAGV. Residues 36-146 form the Ig-like V-type domain; sequence SALEVYTPKE…VKNPPDIVVQ (111 aa). At 36-162 the chain is on the extracellular side; it reads SALEVYTPKE…YVVEKENLPV (127 aa). Residues N50 and N130 are each glycosylated (N-linked (GlcNAc...) asparagine). The cysteines at positions 58 and 135 are disulfide-linked. The helical transmembrane segment at 163-183 threads the bilayer; it reads FPVWVVVGIVTAVVLGLTLLI. Residues 184–269 are Cytoplasmic-facing; sequence SMILAVLYRR…SVVYADIRKN (86 aa). The segment at 199–238 is disordered; that stretch reads DYTGCSTSESLSPVKQAPRKSPSDTEGLVKSLPSGSHQGP. The span at 202–211 shows a compositional bias: polar residues; sequence GCSTSESLSP. S204, S206, S208, S210, S219, and S221 each carry phosphoserine. The ITIM motif 1 motif lies at 239–244; that stretch reads VIYAQL. The residue at position 241 (Y241) is a Phosphotyrosine. S260 carries the post-translational modification Phosphoserine. The ITIM motif 2 motif lies at 261–266; it reads VVYADI. Y263 carries the post-translational modification Phosphotyrosine.

This sequence belongs to the myelin P0 protein family. In terms of assembly, interacts with phosphorylated PTPN11/SHP-2. Phosphorylated on tyrosine residues upon stimulation with pervanadate and concanavalin-A (ConA). Phosphorylation at Tyr-241 and Tyr-263 is required for interaction with PTPN11/SHP-2. Dephosphorylated by PTPN11/SHP-2 (in vitro). In terms of processing, N-glycosylated. N-glycosylation is required for concanavalin A binding. As to expression, widely expressed with highest levels in heart, placenta, kidney and pancreas. Isoform 3 is relatively abundant in hematopoietic tissues and fetal liver. Isoform 1 and isoform 3 are expressed in CD14- PB monocytes and pre-B cell progenitors. Isoform 3 appears to be the major isoform in CD34- promyelocytic and promonocytic cells. During differentiation in monocytic cells, the expression level of isoform 3 decreases and that of isoform 1 increases. Isoform 1 is prominent in stromal cells and, to a lesser extent, in umbilical vein endothelial cells and erythroid progenitors. Isoform 2 is expressed in a erythroid progenitor cell line.

It localises to the membrane. Its function is as follows. Cell surface receptor, which is involved in signal transduction processes. Recruits PTPN11/SHP-2 to the cell membrane and is a putative substrate of PTPN11/SHP-2. Is a major receptor for concanavalin-A (ConA) and is involved in cellular signaling induced by ConA, which probably includes Src family tyrosine-protein kinases. Isoform 3 seems to have a dominant negative role; it blocks tyrosine phosphorylation of MPZL1 induced by ConA. Isoform 1, but not isoform 2 and isoform 3, may be involved in regulation of integrin-mediated cell motility. This chain is Myelin protein zero-like protein 1 (MPZL1), found in Homo sapiens (Human).